The following is a 90-amino-acid chain: Molybdopterin synthase sulfur carrier subunit (90 aa).

A 1-thioglycine; alternate modification is found at G90. G90 is modified (glycyl adenylate; alternate).

This sequence belongs to the MoaD family. MOCS2A subfamily. In terms of assembly, heterotetramer; composed of 2 small (Mocs2A) and 2 large (Mocs2B) subunits. Post-translationally, C-terminal thiocarboxylation occurs in 2 steps, it is first acyl-adenylated (-COAMP) via the hesA/moeB/thiF part of MOCS3, then thiocarboxylated (-COSH) via the rhodanese domain of MOCS3.

It is found in the cytoplasm. Its pathway is cofactor biosynthesis; molybdopterin biosynthesis. Acts as a sulfur carrier required for molybdopterin biosynthesis. Component of the molybdopterin synthase complex that catalyzes the conversion of precursor Z into molybdopterin by mediating the incorporation of 2 sulfur atoms into precursor Z to generate a dithiolene group. In the complex, serves as sulfur donor by being thiocarboxylated (-COSH) at its C-terminus by MOCS3. After interaction with Mocs2B, the sulfur is then transferred to precursor Z to form molybdopterin. In Drosophila yakuba (Fruit fly), this protein is Molybdopterin synthase sulfur carrier subunit.